Consider the following 278-residue polypeptide: Nucleotide-binding protein Tlet_0523 (278 aa).

ATP is bound at residue 9–16; the sequence is GLSGAGKS. Residue 58–61 participates in GTP binding; sequence DIRS.

It belongs to the RapZ-like family.

Displays ATPase and GTPase activities. In Pseudothermotoga lettingae (strain ATCC BAA-301 / DSM 14385 / NBRC 107922 / TMO) (Thermotoga lettingae), this protein is Nucleotide-binding protein Tlet_0523.